The sequence spans 38 residues: Large ribosomal subunit protein bL36 (38 aa).

Belongs to the bacterial ribosomal protein bL36 family.

In Pseudoalteromonas atlantica (strain T6c / ATCC BAA-1087), this protein is Large ribosomal subunit protein bL36.